The chain runs to 107 residues: SOSS complex subunit C (107 aa).

Belongs to the SOSS-C family. In terms of assembly, belongs to the multiprotein complex Integrator. Component of the SOSS complex, composed of soss-b (soss-b1/nabp2 or soss-b2/nabp1), soss-a/ints3 and soss-c/inip.

Its subcellular location is the nucleus. Its function is as follows. Component of the SOSS complex, a multiprotein complex that functions downstream of the MRN complex to promote DNA repair and G2/M checkpoint. The SOSS complex associates with single-stranded DNA at DNA lesions and influences diverse endpoints in the cellular DNA damage response including cell-cycle checkpoint activation, recombinational repair and maintenance of genomic stability. Required for efficient homologous recombination-dependent repair of double-strand breaks (DSBs). The protein is SOSS complex subunit C (inip) of Salmo salar (Atlantic salmon).